Reading from the N-terminus, the 224-residue chain is Propanediol dehydratase medium subunit (224 aa).

The interval 1 to 18 (MEINEKLLRQIIEDVLRD) is targets protein to the BMC.

This sequence belongs to the diol/glycerol dehydratase medium subunit family. In terms of assembly, the propanediol dehydratase enzyme is a heterotrimeric complex composed of a large (PduC), a medium (PduD) and a small (PduE) subunit. Adenosylcob(III)alamin serves as cofactor.

The protein resides in the bacterial microcompartment. It catalyses the reaction propane-1,2-diol = propanal + H2O. It participates in polyol metabolism; 1,2-propanediol degradation. Inhibited by glycerol. Its function is as follows. Part of the PduCDE complex that catalyzes the dehydration of 1,2-propanediol (1,2-PD) to propionaldehyde. Required for S.typhimurium growth on 1,2-PD as the sole carbon and energy source. This subunit is directly targeted to the bacterial microcompartment (BMC) dedicated to 1,2-PD degradation, and is also responsible for targeting the other 2 subunits (pduC and pduE). In terms of biological role, the 1,2-PD-specific bacterial microcompartment (BMC) concentrates low levels of 1,2-PD catabolic enzymes, concentrates volatile reaction intermediates thus enhancing pathway flux and keeps the level of toxic, mutagenic propionaldehyde low. The sequence is that of Propanediol dehydratase medium subunit from Salmonella typhimurium (strain LT2 / SGSC1412 / ATCC 700720).